Here is a 584-residue protein sequence, read N- to C-terminus: Aspartate--tRNA(Asp/Asn) ligase (584 aa).

Glutamate 173 contributes to the L-aspartate binding site. Positions glutamine 197–lysine 200 are aspartate. Residue arginine 219 participates in L-aspartate binding. ATP is bound by residues arginine 219–glutamate 221 and glutamine 228. Histidine 447 serves as a coordination point for L-aspartate. Glutamate 477 contacts ATP. An L-aspartate-binding site is contributed by arginine 484. Glycine 529–arginine 532 serves as a coordination point for ATP.

The protein belongs to the class-II aminoacyl-tRNA synthetase family. Type 1 subfamily. In terms of assembly, homodimer.

Its subcellular location is the cytoplasm. The catalysed reaction is tRNA(Asx) + L-aspartate + ATP = L-aspartyl-tRNA(Asx) + AMP + diphosphate. Aspartyl-tRNA synthetase with relaxed tRNA specificity since it is able to aspartylate not only its cognate tRNA(Asp) but also tRNA(Asn). Reaction proceeds in two steps: L-aspartate is first activated by ATP to form Asp-AMP and then transferred to the acceptor end of tRNA(Asp/Asn). This Campylobacter hominis (strain ATCC BAA-381 / DSM 21671 / CCUG 45161 / LMG 19568 / NCTC 13146 / CH001A) protein is Aspartate--tRNA(Asp/Asn) ligase.